We begin with the raw amino-acid sequence, 302 residues long: Aliphatic sulfonates import ATP-binding protein SsuB (302 aa).

The span at 30 to 57 shows a compositional bias: low complexity; sequence PATADAQHTADAQHTADAQHTADAQHTA. Residues 30-65 are disordered; it reads PATADAQHTADAQHTADAQHTADAQHTAETAETRGA. In terms of domain architecture, ABC transporter spans 70-284; sequence IRIRGLRRTF…RRTDPAFDRL (215 aa). 102–109 lines the ATP pocket; the sequence is GRSGSGKS.

It belongs to the ABC transporter superfamily. Aliphatic sulfonates importer (TC 3.A.1.17.2) family. The complex is composed of two ATP-binding proteins (SsuB), two transmembrane proteins (SsuC) and a solute-binding protein (SsuA).

The protein resides in the cell membrane. The enzyme catalyses ATP + H2O + aliphatic sulfonate-[sulfonate-binding protein]Side 1 = ADP + phosphate + aliphatic sulfonateSide 2 + [sulfonate-binding protein]Side 1.. Functionally, part of the ABC transporter complex SsuABC involved in aliphatic sulfonates import. Responsible for energy coupling to the transport system. In Frankia casuarinae (strain DSM 45818 / CECT 9043 / HFP020203 / CcI3), this protein is Aliphatic sulfonates import ATP-binding protein SsuB.